The following is a 495-amino-acid chain: ATP synthase subunit beta, chloroplastic (495 aa).

172 to 179 (GGAGVGKT) contacts ATP.

Belongs to the ATPase alpha/beta chains family. F-type ATPases have 2 components, CF(1) - the catalytic core - and CF(0) - the membrane proton channel. CF(1) has five subunits: alpha(3), beta(3), gamma(1), delta(1), epsilon(1). CF(0) has four main subunits: a(1), b(1), b'(1) and c(9-12).

The protein localises to the plastid. It localises to the chloroplast thylakoid membrane. The catalysed reaction is ATP + H2O + 4 H(+)(in) = ADP + phosphate + 5 H(+)(out). Its function is as follows. Produces ATP from ADP in the presence of a proton gradient across the membrane. The catalytic sites are hosted primarily by the beta subunits. The protein is ATP synthase subunit beta, chloroplastic of Hyacinthus orientalis (Common hyacinth).